The sequence spans 470 residues: MTPFMTEDFLLDTEFARRLYHDYAKDQPIFDYHCHLPPQQIAENYRFKNLYDIWLKGDHYKWRAMRTNGVPERLCTGDASDREKFDAWAATVPHTIGNPLYHWTHLELRRPFGITGKLLSPKTADEIWNQCNDLLAQDAFSARGIMQQMNVKMVGTTDDPIDSLEHHATIAKDSAFTVKVLPSWRPDKAFNIEQATFADYMAKLAEVSDTDIRRFSDLQTALTKRLDHFAAHGCKVSDHALDVVLFAEASESELNAILSRRLAGETLSGHEIAQFKTAVLVWLGAEYARRGWVQQYHIGALRNNNQRQFRLLGPDVGFDSINDRPLAEELSKLLSKQNEENLLPKTILYCLNPRDNEVLGTMIGNFQGEGMPGKMQFGSGWWFNDQKDGMERQMTQLAQLGLLSRFVGMLTDSRSFLSYTRHEYFRRILCQMIGRWVEAGEAPADIDLLGEMVKNICFNNARDYFAIELH.

Belongs to the metallo-dependent hydrolases superfamily. Uronate isomerase family.

The catalysed reaction is D-glucuronate = D-fructuronate. The enzyme catalyses aldehydo-D-galacturonate = keto-D-tagaturonate. The protein operates within carbohydrate metabolism; pentose and glucuronate interconversion. The chain is Uronate isomerase from Cronobacter sakazakii (strain ATCC BAA-894) (Enterobacter sakazakii).